An 871-amino-acid chain; its full sequence is Tegument protein UL47 homolog (871 aa).

The tract at residues 1 to 212 (MDQHHGARGG…DEDDMEVIRD (212 aa)) is disordered. Residues 13–33 (IRRPRRSIESRSHPFRATGNT) carry the Nuclear localization signal motif. Polar residues-rich tracts occupy residues 30-41 (TGNTQRTYSTPR) and 59-81 (EQASNQDESSNPSTSNAQQSTSF). Composition is skewed to acidic residues over residues 114–134 (SSSEEEEEEGPAQAPLDEEDQ), 146–155 (SSDENDEEED), and 185–207 (SESETDIDAEEEEEDDEDDEDDM).

The protein belongs to the alphaherpesvirinae HHV-1 UL47 family. As to quaternary structure, interacts with US3 kinase. Interacts with UL31 and UL34; these interactions seem important for efficient virion nuclear egress. Interacts with UL41/VHS. Phosphorylated by US3. This phosphorylation is required for proper nuclear localization.

The protein resides in the virion tegument. The protein localises to the host nucleus. It localises to the host cytoplasm. Tegument protein that can bind to various RNA transcripts. Plays a role in the attenuation of selective viral and cellular mRNA degradation by modulating the activity of host shutoff RNase UL41/VHS. Also plays a role in the primary envelopment of virions in the perinuclear space, probably by interacting with two nuclear egress proteins UL31 and UL34. This chain is Tegument protein UL47 homolog, found in Equus caballus (Horse).